A 205-amino-acid chain; its full sequence is MSVDPMTYEAQFFGFTPQTCMLRIYIAFQDYLFEVMQAVEQVILKKLDGIPDCDISPVQIRKCTEKFLCFMKGHFDNLFSKMEQLFLQLILRIPSNILLPEDKCKETPYSEEDFQHLQKEIEQLQEKYKTELCTKQALLAELEEQKIVQAKLKQTLTFFDELHNVGRDHGTSDFRESLVSLVQNSRKLQNIRDNVEKESKRLKIS.

Residues 108 to 205 (PYSEEDFQHL…EKESKRLKIS (98 aa)) adopt a coiled-coil conformation.

It belongs to the mis12 family. Component of the MIS12 complex composed of MIS12, DSN1, NSL1 and PMF1. Also interacts with KNL1, CBX3, CBX5, NDC80 and ZWINT.

Its subcellular location is the chromosome. It localises to the centromere. The protein localises to the kinetochore. In terms of biological role, part of the MIS12 complex which is required for normal chromosome alignment and segregation and for kinetochore formation during mitosis. Essential for proper kinetochore microtubule attachments. The polypeptide is Protein MIS12 homolog (Homo sapiens (Human)).